The primary structure comprises 89 residues: Small ribosomal subunit protein uS15 (89 aa).

It belongs to the universal ribosomal protein uS15 family. In terms of assembly, part of the 30S ribosomal subunit. Forms a bridge to the 50S subunit in the 70S ribosome, contacting the 23S rRNA.

In terms of biological role, one of the primary rRNA binding proteins, it binds directly to 16S rRNA where it helps nucleate assembly of the platform of the 30S subunit by binding and bridging several RNA helices of the 16S rRNA. Functionally, forms an intersubunit bridge (bridge B4) with the 23S rRNA of the 50S subunit in the ribosome. The sequence is that of Small ribosomal subunit protein uS15 from Lactobacillus johnsonii (strain CNCM I-12250 / La1 / NCC 533).